The primary structure comprises 585 residues: Aspartate--tRNA(Asp/Asn) ligase (585 aa).

Glu173 serves as a coordination point for L-aspartate. The interval 197–200 is aspartate; it reads QLFK. An L-aspartate-binding site is contributed by Arg219. Residues 219–221 and Gln228 contribute to the ATP site; that span reads RDE. His447 serves as a coordination point for L-aspartate. Residue Glu477 coordinates ATP. Arg484 contributes to the L-aspartate binding site. 529–532 serves as a coordination point for ATP; that stretch reads GFDR.

Belongs to the class-II aminoacyl-tRNA synthetase family. Type 1 subfamily. As to quaternary structure, homodimer.

The protein localises to the cytoplasm. It catalyses the reaction tRNA(Asx) + L-aspartate + ATP = L-aspartyl-tRNA(Asx) + AMP + diphosphate. Functionally, aspartyl-tRNA synthetase with relaxed tRNA specificity since it is able to aspartylate not only its cognate tRNA(Asp) but also tRNA(Asn). Reaction proceeds in two steps: L-aspartate is first activated by ATP to form Asp-AMP and then transferred to the acceptor end of tRNA(Asp/Asn). This chain is Aspartate--tRNA(Asp/Asn) ligase, found in Campylobacter concisus (strain 13826).